The following is a 95-amino-acid chain: Small ribosomal subunit protein uS17 (95 aa).

It belongs to the universal ribosomal protein uS17 family. Part of the 30S ribosomal subunit.

Functionally, one of the primary rRNA binding proteins, it binds specifically to the 5'-end of 16S ribosomal RNA. The sequence is that of Small ribosomal subunit protein uS17 from Mycoplasmopsis synoviae (strain 53) (Mycoplasma synoviae).